Consider the following 179-residue polypeptide: Natural killer cells antigen CD94 (179 aa).

The Cytoplasmic portion of the chain corresponds to 1 to 10 (MAVFKTTLWR). The chain crosses the membrane as a helical; Signal-anchor for type II membrane protein span at residues 11 to 31 (LISGTLGIICLSLMATLGILL). The Extracellular segment spans residues 32 to 179 (KNSFTKLSIE…NRYICKQQLI (148 aa)). 2 disulfide bridges follow: C58/C70 and C61/C72. In terms of domain architecture, C-type lectin spans 68–175 (YRCNCYFISS…CEDKNRYICK (108 aa)). N-linked (GlcNAc...) asparagine glycans are attached at residues N83 and N132. 2 disulfide bridges follow: C89–C174 and C152–C166.

As to quaternary structure, can form disulfide-bonded heterodimer with NKG2 family members KLRC1 and KLRC2. KLRD1-KLRC1 heterodimer interacts with peptide-bound MHC-E-B2M heterotrimeric complex. KLRD1 plays a prominent role in directly interacting with MHC-E. KLRD1-KLRC1 interacts with much higher affinity with peptide-bound MHC-E-B2M than KLRD1-KLRC2. Interacts with the adapter protein TYROBP/DAP12; this interaction is required for cell surface expression and cell activation. Natural killer cells.

It localises to the cell membrane. Immune receptor involved in self-nonself discrimination. In complex with KLRC1 or KLRC2 on cytotoxic and regulatory lymphocyte subsets, recognizes non-classical major histocompatibility (MHC) class Ib molecule MHC-E loaded with self-peptides derived from the signal sequence of classical MHC class Ia and non-classical MHC class Ib molecules. Enables cytotoxic cells to monitor the expression of MHC class I molecules in healthy cells and to tolerate self. Primarily functions as a ligand binding subunit as it lacks the capacity to signal. Functionally, KLRD1-KLRC1 acts as an immune inhibitory receptor. Key inhibitory receptor on natural killer (NK) cells that regulates their activation and effector functions. Dominantly counteracts T cell receptor signaling on a subset of memory/effector CD8-positive T cells as part of an antigen-driven response to avoid autoimmunity. On intraepithelial CD8-positive gamma-delta regulatory T cells triggers TGFB1 secretion, which in turn limits the cytotoxic programming of intraepithelial CD8-positive alpha-beta T cells, distinguishing harmless from pathogenic antigens. In MHC-E-rich tumor microenvironment, acts as an immune inhibitory checkpoint and may contribute to progressive loss of effector functions of NK cells and tumor-specific T cells, a state known as cell exhaustion. Upon MHC-E-peptide binding, transmits intracellular signals through KLRC1 immunoreceptor tyrosine-based inhibition motifs (ITIMs) by recruiting INPP5D/SHIP-1 and INPPL1/SHIP-2 tyrosine phosphatases to ITIMs, and ultimately opposing signals transmitted by activating receptors through dephosphorylation of proximal signaling molecules. In terms of biological role, KLRD1-KLRC2 acts as an immune activating receptor. On cytotoxic lymphocyte subsets recognizes MHC-E loaded with signal sequence-derived peptides from non-classical MHC class Ib MHC-G molecules, likely playing a role in the generation and effector functions of adaptive NK cells and in maternal-fetal tolerance during pregnancy. Regulates the effector functions of terminally differentiated cytotoxic lymphocyte subsets, and in particular may play a role in adaptive NK cell response to viral infection. Upon MHC-E-peptide binding, transmits intracellular signals via the adapter protein TYROBP/DAP12, triggering the phosphorylation of proximal signaling molecules and cell activation. This Pan troglodytes (Chimpanzee) protein is Natural killer cells antigen CD94 (KLRD1).